Reading from the N-terminus, the 316-residue chain is Methionyl-tRNA formyltransferase (316 aa).

Residue 111-114 (SLLP) participates in (6S)-5,6,7,8-tetrahydrofolate binding.

Belongs to the Fmt family.

The catalysed reaction is L-methionyl-tRNA(fMet) + (6R)-10-formyltetrahydrofolate = N-formyl-L-methionyl-tRNA(fMet) + (6S)-5,6,7,8-tetrahydrofolate + H(+). Functionally, attaches a formyl group to the free amino group of methionyl-tRNA(fMet). The formyl group appears to play a dual role in the initiator identity of N-formylmethionyl-tRNA by promoting its recognition by IF2 and preventing the misappropriation of this tRNA by the elongation apparatus. This chain is Methionyl-tRNA formyltransferase, found in Limosilactobacillus fermentum (strain NBRC 3956 / LMG 18251) (Lactobacillus fermentum).